The primary structure comprises 126 residues: Small ribosomal subunit protein uS11 (126 aa).

The protein belongs to the universal ribosomal protein uS11 family. Part of the 30S ribosomal subunit.

In terms of biological role, located on the platform of the 30S subunit. The sequence is that of Small ribosomal subunit protein uS11 from Methanosarcina mazei (strain ATCC BAA-159 / DSM 3647 / Goe1 / Go1 / JCM 11833 / OCM 88) (Methanosarcina frisia).